The following is a 156-amino-acid chain: RNA polymerase sigma factor SigS (156 aa).

Positions E29–I44 match the Polymerase core binding motif. Residues Q126–M145 constitute a DNA-binding region (H-T-H motif).

The protein belongs to the sigma-70 factor family.

Sigma factors are initiation factors that promote the attachment of RNA polymerase to specific initiation sites and are then released. Sigma-S contributes to the protection against external stress, thus playing a role in cellular fitness and survival. This chain is RNA polymerase sigma factor SigS (sigS), found in Staphylococcus aureus (strain COL).